A 352-amino-acid chain; its full sequence is Phenylalanine--tRNA ligase alpha subunit (352 aa).

Glutamate 258 lines the Mg(2+) pocket.

Belongs to the class-II aminoacyl-tRNA synthetase family. Phe-tRNA synthetase alpha subunit type 1 subfamily. Tetramer of two alpha and two beta subunits. Mg(2+) is required as a cofactor.

Its subcellular location is the cytoplasm. The catalysed reaction is tRNA(Phe) + L-phenylalanine + ATP = L-phenylalanyl-tRNA(Phe) + AMP + diphosphate + H(+). The chain is Phenylalanine--tRNA ligase alpha subunit from Staphylococcus haemolyticus (strain JCSC1435).